Consider the following 499-residue polypeptide: Protein SENSITIVE TO PROTON RHIZOTOXICITY 1 (499 aa).

Residues 1 to 31 form a disordered region; that stretch reads METEDDLCNTNWGSSSSKSREPGSSDCGNST. The C2H2-type 1 zinc-finger motif lies at 244–266; that stretch reads HFCTICGKGFKRDANLRMHMRGH. The segment at 354–385 adopts a C2H2-type 2; atypical zinc-finger fold; that stretch reads KHCGKNKWLCSCGTTFSRKDKLFGHIALFQGH. Residues 390 to 436 are disordered; that stretch reads PLEETKPSASTSTQRGSSEGGNNNQGMVGFNLGSASNANQETTQPGM. 2 stretches are compositionally biased toward polar residues: residues 396–415 and 422–435; these read PSAS…NNQG and GSAS…TQPG.

As to expression, expressed in roots (e.g. root tips and lateral roots), leaves, flowers (e.g. stigma, sepal, anther, and filament), stems, siliques and cotyledons.

Its subcellular location is the nucleus. Its function is as follows. Probable transcription factor. Together with STOP2, plays a critical role in tolerance to major stress factors in acid soils such as proton H(+) and aluminum ion Al(3+). Required for the expression of genes in response to acidic stress (e.g. ALMT1 and MATE), and Al-activated citrate exudation. This is Protein SENSITIVE TO PROTON RHIZOTOXICITY 1 from Arabidopsis thaliana (Mouse-ear cress).